We begin with the raw amino-acid sequence, 348 residues long: Propane 2-monooxygenase, reductase component (348 aa).

Positions 5 to 95 (HKINFDPVDI…DCTIELLNFD (91 aa)) constitute a 2Fe-2S ferredoxin-type domain. [2Fe-2S] cluster is bound by residues C39, C44, C47, and C79. Positions 105–206 (IQDVRTQVQA…TGPYGSFTLK (102 aa)) constitute an FAD-binding FR-type domain.

The protein belongs to the bacterial ring-hydroxylating dioxygenase ferredoxin reductase family. The propane 2-monooxygenase multicomponent enzyme system is composed of an electron transfer component and a monooxygenase component interacting with the effector protein MimD. The electron transfer component is composed of a reductase (MimB), and the monooxygenase component is formed by a large subunit (MimA) and a small subunit (MimC). FAD serves as cofactor. Requires [2Fe-2S] cluster as cofactor.

Reductase component of the propane 2-monooxygenase multicomponent enzyme system which is involved in the degradation of propane via the O2-dependent hydroxylation of propane. Reductase catalyzes the transfer of electrons from NADH or NADPH to monooxygenase. The polypeptide is Propane 2-monooxygenase, reductase component (Mycolicibacterium smegmatis (strain ATCC 700084 / mc(2)155) (Mycobacterium smegmatis)).